The sequence spans 345 residues: Selenide, water dikinase (345 aa).

C15 is a catalytic residue. Residues K18 and 46 to 48 (SKD) contribute to the ATP site. D49 contributes to the Mg(2+) binding site. ATP-binding positions include D66, D89, and 137-139 (GHS). A Mg(2+)-binding site is contributed by D89. D225 serves as a coordination point for Mg(2+).

It belongs to the selenophosphate synthase 1 family. Class I subfamily. Homodimer. Mg(2+) serves as cofactor.

The enzyme catalyses hydrogenselenide + ATP + H2O = selenophosphate + AMP + phosphate + 2 H(+). Its function is as follows. Synthesizes selenophosphate from selenide and ATP. The sequence is that of Selenide, water dikinase from Aeromonas salmonicida (strain A449).